The following is a 433-amino-acid chain: Signal recognition particle 54 kDa protein (433 aa).

GTP contacts are provided by residues 100–107 (GLQGSGKT), 180–184 (DTAGR), and 238–241 (TKFD).

This sequence belongs to the GTP-binding SRP family. SRP54 subfamily. As to quaternary structure, part of the signal recognition particle protein translocation system, which is composed of SRP and FtsY. Archaeal SRP consists of a 7S RNA molecule of 300 nucleotides and two protein subunits: SRP54 and SRP19.

The protein localises to the cytoplasm. The catalysed reaction is GTP + H2O = GDP + phosphate + H(+). Its function is as follows. Involved in targeting and insertion of nascent membrane proteins into the cytoplasmic membrane. Binds to the hydrophobic signal sequence of the ribosome-nascent chain (RNC) as it emerges from the ribosomes. The SRP-RNC complex is then targeted to the cytoplasmic membrane where it interacts with the SRP receptor FtsY. The protein is Signal recognition particle 54 kDa protein of Archaeoglobus fulgidus (strain ATCC 49558 / DSM 4304 / JCM 9628 / NBRC 100126 / VC-16).